A 604-amino-acid polypeptide reads, in one-letter code: Glutamine--fructose-6-phosphate aminotransferase [isomerizing] (604 aa).

Cys-2 (nucleophile; for GATase activity) is an active-site residue. One can recognise a Glutamine amidotransferase type-2 domain in the interval 2 to 219 (CGIMGAVSER…EGDSACVTTQ (218 aa)). SIS domains are found at residues 279–427 (LRAS…DNRA) and 454–594 (LASL…VDQP). Catalysis depends on Lys-599, which acts as the For Fru-6P isomerization activity.

In terms of assembly, homodimer.

It is found in the cytoplasm. The enzyme catalyses D-fructose 6-phosphate + L-glutamine = D-glucosamine 6-phosphate + L-glutamate. Functionally, catalyzes the first step in hexosamine metabolism, converting fructose-6P into glucosamine-6P using glutamine as a nitrogen source. This Legionella pneumophila (strain Lens) protein is Glutamine--fructose-6-phosphate aminotransferase [isomerizing].